Consider the following 89-residue polypeptide: Small ribosomal subunit protein uS14A (89 aa).

It belongs to the universal ribosomal protein uS14 family. As to quaternary structure, part of the 30S ribosomal subunit. Contacts proteins S3 and S10.

Binds 16S rRNA, required for the assembly of 30S particles and may also be responsible for determining the conformation of the 16S rRNA at the A site. The polypeptide is Small ribosomal subunit protein uS14A (Listeria innocua serovar 6a (strain ATCC BAA-680 / CLIP 11262)).